We begin with the raw amino-acid sequence, 117 residues long: UPF0102 protein Rsph17029_0461 (117 aa).

Belongs to the UPF0102 family.

The sequence is that of UPF0102 protein Rsph17029_0461 from Cereibacter sphaeroides (strain ATCC 17029 / ATH 2.4.9) (Rhodobacter sphaeroides).